The following is a 224-amino-acid chain: MRLVIARCRVDYVGRLTSHLPTARRLLLVKADGSVSIHADDRAYKPLNWMSPPCWLVETTGDSDDILWVVTNKAGEELRITLEEVEHDSSYELGLDPGLIKDGVEAHLQELLAEHVETLGPGYTLVRREYMTAIGPVDLLVRDADGASVAVEIKRRGEIDGVEQLTRYLELLNRDPLLAPVTGVFAAQQIKPQAKTLANDRGIRCLVLDYEALRGTESTEFRLF.

The protein belongs to the NucS endonuclease family.

It is found in the cytoplasm. Functionally, cleaves both 3' and 5' ssDNA extremities of branched DNA structures. This is Endonuclease NucS from Rhodococcus erythropolis (strain PR4 / NBRC 100887).